Reading from the N-terminus, the 307-residue chain is ATP-dependent (S)-NAD(P)H-hydrate dehydratase (307 aa).

Residues 1-291 (MDHFLKLLPK…DEIPKLVRDV (291 aa)) enclose the YjeF C-terminal domain. (6S)-NADPHX-binding positions include G96 and 150-156 (NIVEFSR). ATP contacts are provided by residues 194–198 (KGEVD) and 214–223 (SSLRRCGGQG). D224 is a binding site for (6S)-NADPHX.

Belongs to the NnrD/CARKD family. Mg(2+) serves as cofactor.

It catalyses the reaction (6S)-NADHX + ATP = ADP + phosphate + NADH + H(+). The enzyme catalyses (6S)-NADPHX + ATP = ADP + phosphate + NADPH + H(+). Functionally, catalyzes the dehydration of the S-form of NAD(P)HX at the expense of ATP, which is converted to ADP. Together with NAD(P)HX epimerase, which catalyzes the epimerization of the S- and R-forms, the enzyme allows the repair of both epimers of NAD(P)HX, a damaged form of NAD(P)H that is a result of enzymatic or heat-dependent hydration. In Caenorhabditis briggsae, this protein is ATP-dependent (S)-NAD(P)H-hydrate dehydratase.